A 673-amino-acid chain; its full sequence is Outer spore wall assembly protein SHE10 (673 aa).

A signal peptide spans 1 to 24 (MRRVRGVGNLLVTILVVLIGFKQA). Residues 503–568 (ILRSQANIAF…LALEQGQGQE (66 aa)) are a coiled coil. 2 disordered regions span residues 530 to 551 (LEQERQIQEQKEREQQELAENE) and 587 to 673 (TPLG…SQAN). Acidic residues-rich tracts occupy residues 593–605 (DNTDYENALDDAD) and 612–629 (GDSEDNFYDSYEGDEEDA). Positions 617–647 (NFYDSYEGDEEDASRELERLERESAERETLD) form a coiled coil. Over residues 630–673 (SRELERLERESAERETLDRLELGQRQKLQEEQHRDELHHSSQAN) the composition is skewed to basic and acidic residues.

The protein belongs to the SHE10 family. As to quaternary structure, component of the mitochondria-localized RNase mitochondrial RNA-processing (RNase MRP) composed of one single RNA encoded by the NME1 gene and at least 31 proteins. Absent in the nucleus-localized RNase MRP (NuMRP).

Its subcellular location is the mitochondrion. Involved in spore wall assembly. May be a component of the mitochondrial RNase MRP (MtMRP), a ribonucleoprotein endoribonuclease involved in the cleaving RNA transcripts to generate primers for DNA replication in mitochondria. The protein is Outer spore wall assembly protein SHE10 of Lachancea thermotolerans (strain ATCC 56472 / CBS 6340 / NRRL Y-8284) (Yeast).